The chain runs to 428 residues: Elongation factor 1-alpha (428 aa).

Residues 5-217 (KPHVNIVFIG…DQIPEPEKPT (213 aa)) enclose the tr-type G domain. A G1 region spans residues 14–21 (GHVDHGKS). 14–21 (GHVDHGKS) lines the GTP pocket. Ser-21 is a Mg(2+) binding site. The segment at 68 to 72 (GITID) is G2. The segment at 89 to 92 (DAPG) is G3. Residues 89–93 (DAPGH) and 144–147 (NKMD) contribute to the GTP site. A G4 region spans residues 144 to 147 (NKMD). The tract at residues 181-183 (SAW) is G5.

It belongs to the TRAFAC class translation factor GTPase superfamily. Classic translation factor GTPase family. EF-Tu/EF-1A subfamily.

It localises to the cytoplasm. The catalysed reaction is GTP + H2O = GDP + phosphate + H(+). In terms of biological role, GTP hydrolase that promotes the GTP-dependent binding of aminoacyl-tRNA to the A-site of ribosomes during protein biosynthesis. The protein is Elongation factor 1-alpha of Thermococcus sibiricus (strain DSM 12597 / MM 739).